Reading from the N-terminus, the 148-residue chain is Putative adenylate kinase (148 aa).

5 residues coordinate ATP: G9, G11, K12, S13, and T14. The interval 28-44 (EGNALAVKYGCLSGDEV) is NMP. The interval 91–101 (DRGYSPEKIDE) is LID. R92 serves as a coordination point for ATP.

The protein belongs to the adenylate kinase family. AK6 subfamily. Interacts with uS11. Not a structural component of 40S pre-ribosomes, but transiently interacts with them by binding to uS11.

The enzyme catalyses AMP + ATP = 2 ADP. It carries out the reaction ATP + H2O = ADP + phosphate + H(+). Functionally, broad-specificity nucleoside monophosphate (NMP) kinase that catalyzes the reversible transfer of the terminal phosphate group between nucleoside triphosphates and monophosphates. Also has ATPase activity. Involved in the late maturation steps of the 30S ribosomal particles, specifically 16S rRNA maturation. While NMP activity is not required for ribosome maturation, ATPase activity is. Associates transiently with small ribosomal subunit protein uS11. ATP hydrolysis breaks the interaction with uS11. May temporarily remove uS11 from the ribosome to enable a conformational change of the ribosomal RNA that is needed for the final maturation step of the small ribosomal subunit. The polypeptide is Putative adenylate kinase (Thermoplasma acidophilum (strain ATCC 25905 / DSM 1728 / JCM 9062 / NBRC 15155 / AMRC-C165)).